A 667-amino-acid chain; its full sequence is DNA ligase (667 aa).

NAD(+)-binding positions include 34–38, 83–84, and E114; these read DQEYD and SL. K116 functions as the N6-AMP-lysine intermediate in the catalytic mechanism. NAD(+) is bound by residues R137, E170, K286, and K310. Zn(2+) contacts are provided by C404, C407, C422, and C427. The region spanning 588–667 is the BRCT domain; it reads HLAQKFENYR…EFQQLLSKED (80 aa).

This sequence belongs to the NAD-dependent DNA ligase family. LigA subfamily. The cofactor is Mg(2+). Requires Mn(2+) as cofactor.

It catalyses the reaction NAD(+) + (deoxyribonucleotide)n-3'-hydroxyl + 5'-phospho-(deoxyribonucleotide)m = (deoxyribonucleotide)n+m + AMP + beta-nicotinamide D-nucleotide.. Functionally, DNA ligase that catalyzes the formation of phosphodiester linkages between 5'-phosphoryl and 3'-hydroxyl groups in double-stranded DNA using NAD as a coenzyme and as the energy source for the reaction. It is essential for DNA replication and repair of damaged DNA. The polypeptide is DNA ligase (Spiroplasma citri).